Here is a 362-residue protein sequence, read N- to C-terminus: Aminomethyltransferase (362 aa).

This sequence belongs to the GcvT family. In terms of assembly, the glycine cleavage system is composed of four proteins: P, T, L and H.

It catalyses the reaction N(6)-[(R)-S(8)-aminomethyldihydrolipoyl]-L-lysyl-[protein] + (6S)-5,6,7,8-tetrahydrofolate = N(6)-[(R)-dihydrolipoyl]-L-lysyl-[protein] + (6R)-5,10-methylene-5,6,7,8-tetrahydrofolate + NH4(+). Functionally, the glycine cleavage system catalyzes the degradation of glycine. This Listeria monocytogenes serotype 4b (strain F2365) protein is Aminomethyltransferase.